The chain runs to 194 residues: Superoxide dismutase [Cu-Zn] (194 aa).

The signal sequence occupies residues 1–20 (MTRPLALIIFLVAILTNTDP). H85 and H104 together coordinate Cu cation. A disulfide bond links C96 and C188. 4 residues coordinate Zn(2+): H104, H112, H121, and D124. H162 lines the Cu cation pocket.

The protein belongs to the Cu-Zn superoxide dismutase family. In terms of assembly, homodimer. It depends on Cu cation as a cofactor. Requires Zn(2+) as cofactor.

It catalyses the reaction 2 superoxide + 2 H(+) = H2O2 + O2. In terms of biological role, destroys radicals which are normally produced within the cells and which are toxic to biological systems. This Ramazzottius varieornatus (Water bear) protein is Superoxide dismutase [Cu-Zn].